Here is a 228-residue protein sequence, read N- to C-terminus: MSSYFLNSTFPVTLPGGQESFLGQIPLYSSGYTDPLRHYPGAAYGGSSVQEKAYPSSFYQQANGAYSRATAAGPCDYATASFYREKDPACALASIEEHSFVLSQDHRKTDCTGSTGKSIYPEADEQKPSAPVYPWMQRMNSCNGTFGNAGRRGRQTYTRYQTLELEKEFHFNRYLTRRRRIEIAHALCLTERQIKIWFQNRRMKWKKENKLINCSQTSGEEEEEKRTE.

Residues 132–137 (VYPWMQ) carry the Antp-type hexapeptide motif. Residues 150-209 (GRRGRQTYTRYQTLELEKEFHFNRYLTRRRRIEIAHALCLTERQIKIWFQNRRMKWKKEN) constitute a DNA-binding region (homeobox).

Belongs to the Antp homeobox family.

The protein localises to the nucleus. Its function is as follows. Sequence-specific transcription factor which is part of a developmental regulatory system that provides cells with specific positional identities on the anterior-posterior axis. This Danio rerio (Zebrafish) protein is Homeobox protein Hox-B6a (hoxb6a).